The chain runs to 36 residues: Photosystem II reaction center protein M (36 aa).

A helical transmembrane segment spans residues 5 to 25 (ILAFIATALFILVPTAFLLII).

It belongs to the PsbM family. As to quaternary structure, PSII is composed of 1 copy each of membrane proteins PsbA, PsbB, PsbC, PsbD, PsbE, PsbF, PsbH, PsbI, PsbJ, PsbK, PsbL, PsbM, PsbT, PsbX, PsbY, PsbZ, Psb30/Ycf12, at least 3 peripheral proteins of the oxygen-evolving complex and a large number of cofactors. It forms dimeric complexes.

The protein localises to the plastid. It localises to the chloroplast thylakoid membrane. Its function is as follows. One of the components of the core complex of photosystem II (PSII). PSII is a light-driven water:plastoquinone oxidoreductase that uses light energy to abstract electrons from H(2)O, generating O(2) and a proton gradient subsequently used for ATP formation. It consists of a core antenna complex that captures photons, and an electron transfer chain that converts photonic excitation into a charge separation. This subunit is found at the monomer-monomer interface. This chain is Photosystem II reaction center protein M, found in Panax ginseng (Korean ginseng).